We begin with the raw amino-acid sequence, 358 residues long: tRNA-specific 2-thiouridylase MnmA (358 aa).

Residues 8–15 and Leu34 each bind ATP; that span reads GLSGGVDS. The active-site Nucleophile is Cys95. Residues Cys95 and Cys194 are joined by a disulfide bond. Gly120 contributes to the ATP binding site. The tract at residues 144-146 is interaction with tRNA; it reads KDQ. Catalysis depends on Cys194, which acts as the Cysteine persulfide intermediate. Residues 299–300 are interaction with tRNA; sequence RY.

Belongs to the MnmA/TRMU family.

Its subcellular location is the cytoplasm. It carries out the reaction S-sulfanyl-L-cysteinyl-[protein] + uridine(34) in tRNA + AH2 + ATP = 2-thiouridine(34) in tRNA + L-cysteinyl-[protein] + A + AMP + diphosphate + H(+). Catalyzes the 2-thiolation of uridine at the wobble position (U34) of tRNA, leading to the formation of s(2)U34. The protein is tRNA-specific 2-thiouridylase MnmA of Synechocystis sp. (strain ATCC 27184 / PCC 6803 / Kazusa).